The following is a 72-amino-acid chain: Putative snRNP Sm-like protein (72 aa).

The 69-residue stretch at 4-72 folds into the Sm domain; it reads RPLDILNDAL…RGDNVVYVSP (69 aa).

It belongs to the snRNP Sm proteins family.

In Methanococcoides burtonii (strain DSM 6242 / NBRC 107633 / OCM 468 / ACE-M), this protein is Putative snRNP Sm-like protein.